The primary structure comprises 440 residues: tRNA(Ile)-lysidine synthase (440 aa).

Position 19–24 (19–24) interacts with ATP; sequence SGGLDS.

Belongs to the tRNA(Ile)-lysidine synthase family.

Its subcellular location is the cytoplasm. It catalyses the reaction cytidine(34) in tRNA(Ile2) + L-lysine + ATP = lysidine(34) in tRNA(Ile2) + AMP + diphosphate + H(+). Functionally, ligates lysine onto the cytidine present at position 34 of the AUA codon-specific tRNA(Ile) that contains the anticodon CAU, in an ATP-dependent manner. Cytidine is converted to lysidine, thus changing the amino acid specificity of the tRNA from methionine to isoleucine. The protein is tRNA(Ile)-lysidine synthase of Buchnera aphidicola subsp. Acyrthosiphon pisum (strain APS) (Acyrthosiphon pisum symbiotic bacterium).